We begin with the raw amino-acid sequence, 932 residues long: Glycine dehydrogenase (decarboxylating) (932 aa).

N6-(pyridoxal phosphate)lysine is present on K685.

The protein belongs to the GcvP family. The glycine cleavage system is composed of four proteins: P, T, L and H. The cofactor is pyridoxal 5'-phosphate.

The enzyme catalyses N(6)-[(R)-lipoyl]-L-lysyl-[glycine-cleavage complex H protein] + glycine + H(+) = N(6)-[(R)-S(8)-aminomethyldihydrolipoyl]-L-lysyl-[glycine-cleavage complex H protein] + CO2. In terms of biological role, the glycine cleavage system catalyzes the degradation of glycine. The P protein binds the alpha-amino group of glycine through its pyridoxal phosphate cofactor; CO(2) is released and the remaining methylamine moiety is then transferred to the lipoamide cofactor of the H protein. This Brucella suis biovar 1 (strain 1330) protein is Glycine dehydrogenase (decarboxylating).